We begin with the raw amino-acid sequence, 506 residues long: Xaa-Pro aminopeptidase 3 (506 aa).

The transit peptide at 1–31 (MPSLLSTPKLAPVLARLRGLSGCMSCLQRRY) directs the protein to the mitochondrion. The interaction with TNFRSF1B stretch occupies residues 54–79 (HPHLLRPGEVTPGLSQVEYALRRHKL). Positions 300, 331, 342, 423, 430, 450, and 474 each coordinate substrate. Residues Asp331, Asp342, and His423 each coordinate Mn(2+). Mn(2+) is bound by residues Glu450 and Glu474.

The protein belongs to the peptidase M24B family. Homodimer. Interacts with TNFRSF1B/TNFR2 (activated) and TRAF2. Mn(2+) is required as a cofactor. Expressed in brain, kidney, heart, liver, skeletal muscle and testis.

Its subcellular location is the mitochondrion. The protein resides in the cytoplasm. It carries out the reaction Release of any N-terminal amino acid, including proline, that is linked to proline, even from a dipeptide or tripeptide.. In terms of biological role, catalyzes the removal of a penultimate prolyl residue from the N-termini of peptides, such as Leu-Pro-Ala. Also shows low activity towards peptides with Ala or Ser at the P1 position. Promotes TNFRSF1B-mediated phosphorylation of MAPK8/JNK1 and MAPK9/JNK2, suggesting a function as an adapter protein for TNFRSF1B; the effect is independent of XPNPEP3 peptidase activity. May inhibit apoptotic cell death induced via TNF-TNFRSF1B signaling. This Mus musculus (Mouse) protein is Xaa-Pro aminopeptidase 3 (Xpnpep3).